The sequence spans 313 residues: Fructose-1,6-bisphosphatase class 1 (313 aa).

Mg(2+) contacts are provided by glutamate 90, aspartate 111, leucine 113, and aspartate 114. Substrate is bound by residues 114-117 (DGSS), tyrosine 222, and lysine 253. Glutamate 259 provides a ligand contact to Mg(2+).

This sequence belongs to the FBPase class 1 family. Homotetramer. It depends on Mg(2+) as a cofactor.

It is found in the cytoplasm. It catalyses the reaction beta-D-fructose 1,6-bisphosphate + H2O = beta-D-fructose 6-phosphate + phosphate. It participates in carbohydrate biosynthesis; gluconeogenesis. This Geotalea uraniireducens (strain Rf4) (Geobacter uraniireducens) protein is Fructose-1,6-bisphosphatase class 1.